We begin with the raw amino-acid sequence, 529 residues long: Protein PNS1 (529 aa).

The disordered stretch occupies residues 1–58 (MSQQYSYGGGGGAGYPPPQMQPPNSYAQANYQGQPQGAQNQYYNGQQPHHNAPQQYYG). Residues 1 to 84 (MSQQYSYGGG…LQPKPKFRDP (84 aa)) lie on the Cytoplasmic side of the membrane. Low complexity predominate over residues 22 to 48 (PPNSYAQANYQGQPQGAQNQYYNGQQP). A helical membrane pass occupies residues 85–105 (IFLVLFLLVFAGFIALSVICL). Over 106-132 (RSYSNADVNVSIGRANVAGSTLNGHTA) the chain is Extracellular. Asn114 carries an N-linked (GlcNAc...) asparagine glycan. A helical membrane pass occupies residues 133 to 153 (IMFMICCAVALVLSFVYILLV). At 154–158 (RTFPK) the chain is on the cytoplasmic side. A helical transmembrane segment spans residues 159–179 (IILEATLLLTTLSNVAFCVYL). The Extracellular segment spans residues 180-184 (WVRGN). The helical transmembrane segment at 185–205 (TAAAIIFTIFAVLSVIAYFFM) threads the bilayer. At 206–230 (RKRIPLAKLILVTVIRTAEQYKSVY) the chain is on the cytoplasmic side. A helical membrane pass occupies residues 231-251 (VVALGGLIVETAFSAWTSWVV). Residues 252–271 (VAAYQRFEPSGQAAGSSSSN) lie on the Extracellular side of the membrane. An N-linked (GlcNAc...) asparagine glycan is attached at Asn271. Residues 272–292 (ASIIGIMVFIVFAYYWISEVI) traverse the membrane as a helical segment. Residues 293–294 (KN) are Cytoplasmic-facing. The helical transmembrane segment at 295–315 (IAFTTVAGIFGVAYYNANKVA) threads the bilayer. Residues 316-325 (NAAWGAFRRS) are Extracellular-facing. A helical transmembrane segment spans residues 326–346 (MTYSLGSICFGSLIVAILDLL). Over 347 to 362 (RALFNILQSQAASDGD) the chain is Cytoplasmic. Residues 363–383 (MTGQILACVAGCCVSCIQGLV) form a helical membrane-spanning segment. The Extracellular segment spans residues 384-427 (DYFNRYAYINIALYGNGYITAAKETWALLKDRGIDAIINDSLVN). N-linked (GlcNAc...) asparagine glycosylation is present at Asn422. The chain crosses the membrane as a helical span at residues 428 to 448 (IVFNCGAFIIGLLTALFAFIY). Residues 449–464 (EQLTNPRYLQNDAGYY) lie on the Cytoplasmic side of the membrane. Residues 465-485 (SIVLLVAFGLGFNIALSVGAG) form a helical membrane-spanning segment. The Extracellular portion of the chain corresponds to 486–529 (SIASGVSTYFVALAEDPYILQGKNPELFEMIRQQYPQVVQGVNH).

It belongs to the CTL (choline transporter-like) family.

It localises to the cell membrane. Functionally, probably involved in transport through the plasma membrane. The sequence is that of Protein PNS1 (PNS1) from Mycosarcoma maydis (Corn smut fungus).